A 402-amino-acid chain; its full sequence is Phosphoglycerate kinase (402 aa).

Residues 30–32 (DFN), Arg-46, 70–73 (HLGR), Arg-126, and Arg-159 contribute to the substrate site. Residues Lys-210, Glu-332, and 358 to 361 (GGDT) contribute to the ATP site.

This sequence belongs to the phosphoglycerate kinase family. As to quaternary structure, monomer.

The protein localises to the cytoplasm. The enzyme catalyses (2R)-3-phosphoglycerate + ATP = (2R)-3-phospho-glyceroyl phosphate + ADP. It functions in the pathway carbohydrate degradation; glycolysis; pyruvate from D-glyceraldehyde 3-phosphate: step 2/5. The sequence is that of Phosphoglycerate kinase from Helicobacter hepaticus (strain ATCC 51449 / 3B1).